We begin with the raw amino-acid sequence, 502 residues long: ATP synthase subunit alpha (502 aa).

The disordered stretch occupies residues V115 to G135. G169–T176 provides a ligand contact to ATP.

The protein belongs to the ATPase alpha/beta chains family. F-type ATPases have 2 components, CF(1) - the catalytic core - and CF(0) - the membrane proton channel. CF(1) has five subunits: alpha(3), beta(3), gamma(1), delta(1), epsilon(1). CF(0) has three main subunits: a(1), b(2) and c(9-12). The alpha and beta chains form an alternating ring which encloses part of the gamma chain. CF(1) is attached to CF(0) by a central stalk formed by the gamma and epsilon chains, while a peripheral stalk is formed by the delta and b chains.

The protein localises to the cell membrane. The enzyme catalyses ATP + H2O + 4 H(+)(in) = ADP + phosphate + 5 H(+)(out). Functionally, produces ATP from ADP in the presence of a proton gradient across the membrane. The alpha chain is a regulatory subunit. This Bacillus cereus (strain G9842) protein is ATP synthase subunit alpha.